The following is a 1374-amino-acid chain: MAAPARDPPGYRYAAAILPTGSILSTIEVASHRRLFDFFAAVRSDENSLYDVEFDALLGSYCNTLSLVRFLELGLSVACVCTKFPELAYMNEGRVQFEVHQPLIARDGPHPVEQPVHNYMTKVIDRRALNAAFSLATEAIALLTGEALDGTGISLHRQLRAIQQLARNVQAVLGAFERGTADQMLHVLLEKAPPLALLLPMQRYLDNGRLATRVARATLVAELKRSFCDTSFFLGKAGHRREAIEAWLVDLTTATQPSVAVPRLTHADTRGRPVDGVLVTTAAIKQRLLQSFLKVEDTEADVPVTYGEMVLNGANLVTALVMGKAVRSLDDVGRHLLDMQEEQLEANRETLDELESAPQTTRVRADLVAIGDRLVFLEALERRIYAATNVPYPLVGAMDLTFVLPLGLFNPAMERFAAHAGDLVPAPGHPEPRAFPPRQLFFWGKDHQVLRLSMENAVGTVCHPSLMNIDAAVGGVNHDPVEAANPYGAYVAAPAGPGADMQQRFLNAWRQRLAHGRVRWVAECQMTAEQFMQPDNANLALELHPAFDFFAGVADVELPGGEVPPAGPGAIQATWRVVNGNLPLALCPVAFRDARGLELGVGRHAMAPATIAAVRGAFEDRSYPAVFYLLQAAIHGNEHVFCALARLVTQCITSYWNNTRCAAFVNDYSLVSYIVTYLGGDLPEECMAVYRDLVAHVEALAQLVDDFTLPGPELGGQAQAELNHLMRDPALLPPLVWDCDGLMRHAALDRHRDCRIDAGGHEPVYAAACNVATADFNRNDGRLLHNTQARAADAADDRPHRPADWTVHHKIYYYVLVPAFSRGRCCTAGVRFDRVYATLQNMVVPEIAPGEECPSDPVTDPAHPLHPANLVANTVKRMFHNGRVVVDGPAMLTLQVLAHNMAERTTALLCSAAPDAGANTASTANMRIFDGALHAGVLLMAPQHLDHTIQNGEYFYVLPVHALFAGADHVANAPNFPPALRDLARDVPLVPPALGANYFSSIRQPVVQHARESAAGENALTYALMAGYFKMSPVALYHQLKTGLHPGFGFTVVRQDRFVTENVLFSERASEAYFLGQLQVARHETGGGVNFTLTQPRGNVDLGVGYTAVAATGTVRNPVTDMGNLPQNFYLGRGAPPLLDNAAAVYLRNAVVAGNRLGPAQPLPVFGCAQVPRRAGMDHGQDAVCEFIATPVATDINYFRRPCNPRGRAAGGVYAGDKEGDVIALMYDHGQSDPARPFAATANPWASQRFSYGDLLYNGAYHLNGASPVLSPCFKFFTAADITAKHRCLERLIVETGSAVSTATAASDVQFKRPPGCRELVEDPCGLFQEAYPITCASDPALLRSARDGEAHARETHFTQYLIYDASPLKGLSL.

It belongs to the herpesviridae major capsid protein family. In terms of assembly, homomultimer. Makes the hexons and eleven out of twelve pentons. Interacts with triplex proteins 1/TRX1 and 2/TRX2; adjacent capsomers are linked together in groups of three by triplexes, heterotrimeric complexes composed of one molecule of TRX1 and two molecules of TRX2. Interacts with scaffold protein; this interaction allows efficient MCP transport to the host nucleus. Interacts with capsid vertex component 2/CVC2. Interacts with the small capsomere-interacting protein/SCP.

It is found in the virion. The protein localises to the host nucleus. In terms of biological role, self-assembles to form an icosahedral capsid with a T=16 symmetry, about 200 nm in diameter, and consisting of 150 hexons and 12 pentons (total of 162 capsomers). Hexons form the edges and faces of the capsid and are each composed of six MCP molecules. In contrast, one penton is found at each of the 12 vertices. Eleven of the pentons are MCP pentamers, while the last vertex is occupied by the portal complex. The capsid is surrounded by a layer of proteinaceous material designated the tegument which, in turn, is enclosed in an envelope of host cell-derived lipids containing virus-encoded glycoproteins. This is Major capsid protein from Homo sapiens (Human).